Reading from the N-terminus, the 494-residue chain is Tripartite motif-containing protein 5 (494 aa).

Ala-2 carries the N-acetylalanine modification. The RING-type zinc-finger motif lies at 15–59; sequence CPICLELLTEPLSLDCGHSFCQACITANHKESTPHQGERSCPLCR. The residue at position 86 (Ser-86) is a Phosphoserine. Residues 91-132 form a B box-type zinc finger; that stretch reads QKVGHCARHGEKLLLFCEQDGNVICWLCERSQEHRGHHTFLV. 4 residues coordinate Zn(2+): Cys-96, His-99, Cys-118, and His-124. Positions 131-223 form a coiled coil; sequence LVEEVAEKYQ…RLVQSESDMA (93 aa). Residues 186 to 199 are required for interaction with GABARAP and for autophagy; the sequence is FKQLRDILDCEESK. Positions 280 to 494 constitute a B30.2/SPRY domain; it reads PDLKGMLQAF…LPMTLCSPSS (215 aa).

It belongs to the TRIM/RBCC family. Can form homodimers and homotrimers. In addition to lower-order dimerization, also exhibits a higher-order multimerization and both low- and high-order multimerizations are essential for its restriction activity. Interacts with BTBD1 and BTBD2. Interacts with PSMC4, PSMC5, PSMD7 and HSPA8/HSC70. Interacts (via B30.2/SPRY domain) with HSPA1A/B. Interacts with PSMC2, MAP3K7/TAK1, TAB2 and TAB3. Interacts with SQSTM1. Interacts with TRIM6 and TRIM34. Interacts with ULK1 (phosphorylated form), GABARAP, GABARAPL1, GABARAPL2, MAP1LC3A, MAP1LC3C and BECN1. Post-translationally, degraded in a proteasome-independent fashion in the absence of viral infection but in a proteasome-dependent fashion following exposure to restriction sensitive virus. In terms of processing, autoubiquitinated in a RING finger- and UBE2D2-dependent manner. Monoubiquitinated by TRIM21. Deubiquitinated by Yersinia YopJ. Ubiquitination may not lead to proteasomal degradation.

It localises to the cytoplasm. Its subcellular location is the nucleus. The enzyme catalyses S-ubiquitinyl-[E2 ubiquitin-conjugating enzyme]-L-cysteine + [acceptor protein]-L-lysine = [E2 ubiquitin-conjugating enzyme]-L-cysteine + N(6)-ubiquitinyl-[acceptor protein]-L-lysine.. It participates in protein modification; protein ubiquitination. Functionally, capsid-specific restriction factor that prevents infection from non-host-adapted retroviruses. Blocks viral replication early in the life cycle, after viral entry but before reverse transcription. In addition to acting as a capsid-specific restriction factor, also acts as a pattern recognition receptor that activates innate immune signaling in response to the retroviral capsid lattice. Binding to the viral capsid triggers its E3 ubiquitin ligase activity, and in concert with the heterodimeric ubiquitin conjugating enzyme complex UBE2V1-UBE2N (also known as UBC13-UEV1A complex) generates 'Lys-63'-linked polyubiquitin chains, which in turn are catalysts in the autophosphorylation of the MAP3K7/TAK1 complex (includes TAK1, TAB2, and TAB3). Activation of the MAP3K7/TAK1 complex by autophosphorylation results in the induction and expression of NF-kappa-B and MAPK-responsive inflammatory genes, thereby leading to an innate immune response in the infected cell. Plays a role in regulating autophagy through activation of autophagy regulator BECN1 by causing its dissociation from its inhibitors BCL2 and TAB2. The chain is Tripartite motif-containing protein 5 (TRIM5) from Saguinus oedipus (Cotton-top tamarin).